We begin with the raw amino-acid sequence, 255 residues long: 5-oxoprolinase subunit A (255 aa).

The protein belongs to the LamB/PxpA family. Forms a complex composed of PxpA, PxpB and PxpC.

It carries out the reaction 5-oxo-L-proline + ATP + 2 H2O = L-glutamate + ADP + phosphate + H(+). Functionally, catalyzes the cleavage of 5-oxoproline to form L-glutamate coupled to the hydrolysis of ATP to ADP and inorganic phosphate. This Clostridium beijerinckii (strain ATCC 51743 / NCIMB 8052) (Clostridium acetobutylicum) protein is 5-oxoprolinase subunit A.